Here is a 304-residue protein sequence, read N- to C-terminus: Glyceraldehyde-3-phosphate dehydrogenase 2 (304 aa).

Residues 1 to 2 (RI), Asp-22, and Arg-67 each bind NAD(+). D-glyceraldehyde 3-phosphate is bound by residues 138 to 140 (SCT), Thr-169, 198 to 199 (TG), and Arg-221. Catalysis depends on Cys-139, which acts as the Nucleophile. Residue Asn-303 participates in NAD(+) binding.

It belongs to the glyceraldehyde-3-phosphate dehydrogenase family. Homotetramer.

The protein resides in the cytoplasm. The enzyme catalyses D-glyceraldehyde 3-phosphate + phosphate + NAD(+) = (2R)-3-phospho-glyceroyl phosphate + NADH + H(+). It participates in carbohydrate degradation; glycolysis; pyruvate from D-glyceraldehyde 3-phosphate: step 1/5. The protein is Glyceraldehyde-3-phosphate dehydrogenase 2 (Gapdh2) of Drosophila subobscura (Fruit fly).